The following is a 246-amino-acid chain: Triosephosphate isomerase (246 aa).

9–11 is a binding site for substrate; that stretch reads NWK. Histidine 99 acts as the Electrophile in catalysis. Glutamate 168 functions as the Proton acceptor in the catalytic mechanism. Substrate is bound by residues glycine 174, serine 207, and 228–229; that span reads GG.

This sequence belongs to the triosephosphate isomerase family. Homodimer.

It is found in the cytoplasm. The catalysed reaction is D-glyceraldehyde 3-phosphate = dihydroxyacetone phosphate. Its pathway is carbohydrate biosynthesis; gluconeogenesis. It functions in the pathway carbohydrate degradation; glycolysis; D-glyceraldehyde 3-phosphate from glycerone phosphate: step 1/1. Functionally, involved in the gluconeogenesis. Catalyzes stereospecifically the conversion of dihydroxyacetone phosphate (DHAP) to D-glyceraldehyde-3-phosphate (G3P). In Prochlorococcus marinus (strain NATL1A), this protein is Triosephosphate isomerase.